Here is a 102-residue protein sequence, read N- to C-terminus: Large ribosomal subunit protein uL24 (102 aa).

The protein belongs to the universal ribosomal protein uL24 family. In terms of assembly, part of the 50S ribosomal subunit.

Its function is as follows. One of two assembly initiator proteins, it binds directly to the 5'-end of the 23S rRNA, where it nucleates assembly of the 50S subunit. In terms of biological role, one of the proteins that surrounds the polypeptide exit tunnel on the outside of the subunit. In Paraburkholderia xenovorans (strain LB400), this protein is Large ribosomal subunit protein uL24.